The following is a 119-amino-acid chain: Large ribosomal subunit protein uL14 (119 aa).

This sequence belongs to the universal ribosomal protein uL14 family. In terms of assembly, part of the 50S ribosomal subunit. Forms a cluster with proteins L3 and L19. In the 70S ribosome, L14 and L19 interact and together make contacts with the 16S rRNA in bridges B5 and B8.

In terms of biological role, binds to 23S rRNA. Forms part of two intersubunit bridges in the 70S ribosome. This is Large ribosomal subunit protein uL14 from Wolbachia pipientis subsp. Culex pipiens (strain wPip).